The chain runs to 513 residues: Histidine ammonia-lyase (513 aa).

A cross-link (5-imidazolinone (Ala-Gly)) is located at residues 144-146; the sequence is ASG. Serine 145 bears the 2,3-didehydroalanine (Ser) mark.

The protein belongs to the PAL/histidase family. Post-translationally, contains an active site 4-methylidene-imidazol-5-one (MIO), which is formed autocatalytically by cyclization and dehydration of residues Ala-Ser-Gly.

The protein localises to the cytoplasm. It catalyses the reaction L-histidine = trans-urocanate + NH4(+). Its pathway is amino-acid degradation; L-histidine degradation into L-glutamate; N-formimidoyl-L-glutamate from L-histidine: step 1/3. The protein is Histidine ammonia-lyase of Streptococcus pyogenes serotype M6 (strain ATCC BAA-946 / MGAS10394).